Consider the following 135-residue polypeptide: Ribosome-binding factor A (135 aa).

The protein belongs to the RbfA family. In terms of assembly, monomer. Binds 30S ribosomal subunits, but not 50S ribosomal subunits or 70S ribosomes.

The protein localises to the cytoplasm. Its function is as follows. One of several proteins that assist in the late maturation steps of the functional core of the 30S ribosomal subunit. Associates with free 30S ribosomal subunits (but not with 30S subunits that are part of 70S ribosomes or polysomes). Required for efficient processing of 16S rRNA. May interact with the 5'-terminal helix region of 16S rRNA. This Bartonella tribocorum (strain CIP 105476 / IBS 506) protein is Ribosome-binding factor A.